The sequence spans 638 residues: ATP-dependent zinc metalloprotease FtsH (638 aa).

Over 1–4 (MNNQ) the chain is Cytoplasmic. The helical transmembrane segment at 5–25 (GKNIIVWAVIFVFVILLFNVF) threads the bilayer. Over 26–103 (QSDGLLSSKN…VVPPETRMNT (78 aa)) the chain is Periplasmic. A helical membrane pass occupies residues 104–124 (FLSFLISWFPMLLLIGVWVFF). At 125–638 (MRQMHGGGKA…PIKAKKEDKS (514 aa)) the chain is on the cytoplasmic side. 195–202 (GPPGTGKT) contacts ATP. His417 is a Zn(2+) binding site. Glu418 is a catalytic residue. Positions 421 and 495 each coordinate Zn(2+). Residues 523–544 (SASEDMYTNRNSSSDRSESTSE) form a disordered region.

It in the central section; belongs to the AAA ATPase family. In the C-terminal section; belongs to the peptidase M41 family. As to quaternary structure, homohexamer. Zn(2+) serves as cofactor.

It is found in the cell inner membrane. In terms of biological role, acts as a processive, ATP-dependent zinc metallopeptidase for both cytoplasmic and membrane proteins. Plays a role in the quality control of integral membrane proteins. This Rickettsia bellii (strain RML369-C) protein is ATP-dependent zinc metalloprotease FtsH.